Reading from the N-terminus, the 600-residue chain is Dihydroxy-acid dehydratase (600 aa).

Aspartate 82 serves as a coordination point for Mg(2+). Cysteine 123 lines the [2Fe-2S] cluster pocket. Mg(2+)-binding residues include aspartate 124 and lysine 125. Lysine 125 carries the N6-carboxylysine modification. Cysteine 192 contributes to the [2Fe-2S] cluster binding site. Glutamate 489 is a binding site for Mg(2+). Serine 515 functions as the Proton acceptor in the catalytic mechanism.

It belongs to the IlvD/Edd family. As to quaternary structure, homodimer. The cofactor is [2Fe-2S] cluster. It depends on Mg(2+) as a cofactor.

The enzyme catalyses (2R)-2,3-dihydroxy-3-methylbutanoate = 3-methyl-2-oxobutanoate + H2O. It catalyses the reaction (2R,3R)-2,3-dihydroxy-3-methylpentanoate = (S)-3-methyl-2-oxopentanoate + H2O. Its pathway is amino-acid biosynthesis; L-isoleucine biosynthesis; L-isoleucine from 2-oxobutanoate: step 3/4. The protein operates within amino-acid biosynthesis; L-valine biosynthesis; L-valine from pyruvate: step 3/4. Its function is as follows. Functions in the biosynthesis of branched-chain amino acids. Catalyzes the dehydration of (2R,3R)-2,3-dihydroxy-3-methylpentanoate (2,3-dihydroxy-3-methylvalerate) into 2-oxo-3-methylpentanoate (2-oxo-3-methylvalerate) and of (2R)-2,3-dihydroxy-3-methylbutanoate (2,3-dihydroxyisovalerate) into 2-oxo-3-methylbutanoate (2-oxoisovalerate), the penultimate precursor to L-isoleucine and L-valine, respectively. The polypeptide is Dihydroxy-acid dehydratase (Bacteroides thetaiotaomicron (strain ATCC 29148 / DSM 2079 / JCM 5827 / CCUG 10774 / NCTC 10582 / VPI-5482 / E50)).